The sequence spans 274 residues: HTH-type transcriptional regulator GadX (274 aa).

The 98-residue stretch at 145 to 242 (TRVCTVINNN…GMTPTEYQER (98 aa)) folds into the HTH araC/xylS-type domain. 2 consecutive DNA-binding regions (H-T-H motif) follow at residues 162 to 183 (ARIA…REEE) and 209 to 232 (IKRV…RNYY).

Homodimer.

Functionally, positively regulates the expression of about fifteen genes involved in acid resistance such as gadA, gadB and gadC. Depending on the conditions (growth phase and medium), can repress gadW. The polypeptide is HTH-type transcriptional regulator GadX (gadX) (Escherichia coli O157:H7).